Here is a 1154-residue protein sequence, read N- to C-terminus: PAN2-PAN3 deadenylation complex catalytic subunit pan2 (1154 aa).

WD repeat units follow at residues 20 to 59 (GLPT…RYTS), 102 to 145 (THDE…DKLR), and 276 to 315 (ATVS…HFNE). The tract at residues 316 to 451 (MSKEVEFADV…GARISGESED (136 aa)) is linker. In terms of domain architecture, USP spans 452–821 (DPLLKYSNVE…SPCVLAFQVR (370 aa)). Residues 870–1048 (VALDTEFVDL…IEDARMALRL (179 aa)) form the Exonuclease domain. 4 residues coordinate a divalent metal cation: aspartate 873, glutamate 875, aspartate 982, and aspartate 1041. The segment at 1092-1154 (PGTAVTMQNN…GEFFTGSPLK (63 aa)) is disordered. 2 stretches are compositionally biased toward polar residues: residues 1096–1109 (VTMQ…TPST) and 1132–1141 (LTPSNGTFSG).

This sequence belongs to the peptidase C19 family. PAN2 subfamily. In terms of assembly, forms a heterotrimer with an asymmetric homodimer of the regulatory subunit pan3 to form the poly(A)-nuclease (PAN) deadenylation complex. A divalent metal cation is required as a cofactor.

Its subcellular location is the cytoplasm. It carries out the reaction Exonucleolytic cleavage of poly(A) to 5'-AMP.. Positively regulated by the regulatory subunit pan3. In terms of biological role, catalytic subunit of the poly(A)-nuclease (PAN) deadenylation complex, one of two cytoplasmic mRNA deadenylases involved in mRNA turnover. PAN specifically shortens poly(A) tails of RNA and the activity is stimulated by poly(A)-binding protein pab1. PAN deadenylation is followed by rapid degradation of the shortened mRNA tails by the CCR4-NOT complex. Deadenylated mRNAs are then degraded by two alternative mechanisms, namely exosome-mediated 3'-5' exonucleolytic degradation, or deadenylation-dependent mRNA decaping and subsequent 5'-3' exonucleolytic degradation by xrn1. May also be involved in post-transcriptional maturation of mRNA poly(A) tails. This Emericella nidulans (strain FGSC A4 / ATCC 38163 / CBS 112.46 / NRRL 194 / M139) (Aspergillus nidulans) protein is PAN2-PAN3 deadenylation complex catalytic subunit pan2.